Consider the following 891-residue polypeptide: Longitudinals lacking protein, isoform G (891 aa).

In terms of domain architecture, BTB spans 32–97 (VDCTLAAEGK…MYRGEVNISQ (66 aa)). Disordered stretches follow at residues 115-200 (LSDN…SSVL) and 228-340 (SSGP…ASAS). A Phosphoserine modification is found at serine 140. Phosphothreonine is present on threonine 161. Serine 162 and serine 168 each carry phosphoserine. 4 stretches are compositionally biased toward low complexity: residues 162-175 (SGDV…SSSP), 228-251 (SSGP…LTST), 263-293 (TSST…QTTS), and 329-340 (NSATGPNPASAS). Phosphoserine is present on residues serine 372, serine 375, and serine 378. A disordered region spans residues 446-467 (QDAQQRDPQDLSRKENTAPDVA). Over residues 449-462 (QQRDPQDLSRKENT) the composition is skewed to basic and acidic residues. Phosphoserine occurs at positions 696 and 705. Threonine 706 carries the post-translational modification Phosphothreonine. 2 positions are modified to phosphoserine: serine 749 and serine 750. The C2H2-type 1; degenerate zinc-finger motif lies at 791-813 (YECRHCGKKYRWKSTLRRHENVE). The C2H2-type 2 zinc finger occupies 821-843 (HQCPYCPYKSKQRGNLGVHVRKH). Residues 840–891 (VRKHHTDLPQLPSKRRSKYSMNRENGMSGSMSDDSQGKLIIDFNGKGELETK) form a disordered region. Serine 874 carries the post-translational modification Phosphoserine.

In terms of tissue distribution, expressed in both mesoderm and ectoderm with expression highest in the mesectoderm by stage 11. Becomes enriched in a cluster of brain cells, in abdominal histoblasts, and in the embryonic imaginal disks during later stages.

It is found in the nucleus. Functionally, putative transcription factor required for axon growth and guidance in the central and peripheral nervous systems. Repels CNS axons away from the midline by promoting the expression of the midline repellent sli and its receptor robo. The chain is Longitudinals lacking protein, isoform G from Drosophila melanogaster (Fruit fly).